The primary structure comprises 462 residues: Ubiquitin carboxyl-terminal hydrolase calypso (462 aa).

The UCH catalytic domain maps to 29-260; that stretch reads GWLELESDPG…IRFNLMAVVP (232 aa). The active-site Nucleophile is the Cys115. His197 (proton donor) is an active-site residue. In terms of domain architecture, ULD spans 357–385; sequence NYDKFICTFLTMLAHQGVLGELVSQHLLP. Residues 387-462 form a positively charged C-terminal tail required for binding nucleosomes region; sequence KKISGQSAAN…KGRNKCRKRK (76 aa). A disordered region spans residues 394–462; it reads AANRLNKQNS…KGRNKCRKRK (69 aa). Residues 399–447 are compositionally biased toward low complexity; it reads NKQNSAAASTANSSAGATAGGAKSQQQQQQQQQPQQPQTPKNGKSPGKT. Residues 448 to 462 show a composition bias toward basic residues; it reads PGRRRKGRNKCRKRK.

Belongs to the peptidase C12 family. BAP1 subfamily. In terms of assembly, catalytic component of the polycomb repressive deubiquitinase (PR-DUB) complex, at least composed of caly/calypso, Asx and sba (MBD5/6 homolog). The PR-DUB complex associates with nucleosomes to mediate deubiquitination of histone H2AK118ub1 substrates; the association requires the positively charged C-terminal tail of caly, probably due to direct binding of DNA. Interacts (via ULD domain) with Asx (via DEUBAD domain); the interaction produces a stable heterodimer with a composite binding site for ubiquitin. Homodimerizes (via coiled-coil hinge-region between the UCH and ULD domains) to mediate assembly of 2 copies of the caly-Asx heterodimer into a bisymmetric tetramer; dimerization enhances PR-DUB association with nucleosomes.

The protein resides in the nucleus. It carries out the reaction Thiol-dependent hydrolysis of ester, thioester, amide, peptide and isopeptide bonds formed by the C-terminal Gly of ubiquitin (a 76-residue protein attached to proteins as an intracellular targeting signal).. Its function is as follows. Catalytic component of the polycomb repressive deubiquitinase (PR-DUB) complex, a complex that specifically mediates deubiquitination of histone H2A monoubiquitinated at 'Lys-119' (H2AK118ub1). Mediates bisymmetric organization of the PR-DUB complex and is involved in association with nucleosomes to mediate deubiquitination. Does not deubiquitinate monoubiquitinated histone H2B. Required to maintain the transcriptionally repressive state of homeotic genes throughout development. The PR-DUB complex has weak or no activity toward 'Lys-48'- and 'Lys-63'-linked polyubiquitin chains. Polycomb group (PcG) protein. The chain is Ubiquitin carboxyl-terminal hydrolase calypso from Drosophila virilis (Fruit fly).